A 262-amino-acid polypeptide reads, in one-letter code: Type III pantothenate kinase (262 aa).

9 to 16 is an ATP binding site; sequence DIGNTNVK. Residues Tyr103 and 110–113 contribute to the substrate site; that span reads GADR. Asp112 functions as the Proton acceptor in the catalytic mechanism. Residue Asp134 coordinates K(+). Thr137 provides a ligand contact to ATP. Thr190 serves as a coordination point for substrate.

Belongs to the type III pantothenate kinase family. As to quaternary structure, homodimer. It depends on NH4(+) as a cofactor. K(+) is required as a cofactor.

It is found in the cytoplasm. It catalyses the reaction (R)-pantothenate + ATP = (R)-4'-phosphopantothenate + ADP + H(+). It participates in cofactor biosynthesis; coenzyme A biosynthesis; CoA from (R)-pantothenate: step 1/5. Functionally, catalyzes the phosphorylation of pantothenate (Pan), the first step in CoA biosynthesis. The sequence is that of Type III pantothenate kinase from Nitratidesulfovibrio vulgaris (strain ATCC 29579 / DSM 644 / CCUG 34227 / NCIMB 8303 / VKM B-1760 / Hildenborough) (Desulfovibrio vulgaris).